Reading from the N-terminus, the 197-residue chain is Holliday junction branch migration complex subunit RuvA (197 aa).

The domain I stretch occupies residues 1–63; it reads MYAYLKGIIT…EDAHLLYGFR (63 aa). Residues 64–142 form a domain II region; that stretch reads SEDEKKLFLS…VAGDDLPAKV (79 aa). Residues 143–147 form a flexible linker region; it reads AVQAS. Residues 148-197 are domain III; it reads AENQELEEAMEAMLALGYKATELKKIKKFFEGTTDTAENYIKSALKMLVK.

It belongs to the RuvA family. As to quaternary structure, homotetramer. Forms an RuvA(8)-RuvB(12)-Holliday junction (HJ) complex. HJ DNA is sandwiched between 2 RuvA tetramers; dsDNA enters through RuvA and exits via RuvB. An RuvB hexamer assembles on each DNA strand where it exits the tetramer. Each RuvB hexamer is contacted by two RuvA subunits (via domain III) on 2 adjacent RuvB subunits; this complex drives branch migration. In the full resolvosome a probable DNA-RuvA(4)-RuvB(12)-RuvC(2) complex forms which resolves the HJ.

The protein localises to the cytoplasm. The RuvA-RuvB-RuvC complex processes Holliday junction (HJ) DNA during genetic recombination and DNA repair, while the RuvA-RuvB complex plays an important role in the rescue of blocked DNA replication forks via replication fork reversal (RFR). RuvA specifically binds to HJ cruciform DNA, conferring on it an open structure. The RuvB hexamer acts as an ATP-dependent pump, pulling dsDNA into and through the RuvAB complex. HJ branch migration allows RuvC to scan DNA until it finds its consensus sequence, where it cleaves and resolves the cruciform DNA. The protein is Holliday junction branch migration complex subunit RuvA of Streptococcus pneumoniae (strain Hungary19A-6).